The sequence spans 426 residues: Neuromedin-U receptor 1 (426 aa).

Topologically, residues 1–65 are extracellular; it reads MTPLCLNCSV…QTELFMPICA (65 aa). Residues asparagine 7, asparagine 27, and asparagine 41 are each glycosylated (N-linked (GlcNAc...) asparagine). The chain crosses the membrane as a helical span at residues 66-86; sequence TYLLIFVVGAVGNGLTCLVIL. At 87-97 the chain is on the cytoplasmic side; the sequence is RHKAMRTPTNY. A helical transmembrane segment spans residues 98–118; the sequence is YLFSLAVSDLLVLLVGLPLEL. The Extracellular segment spans residues 119–138; sequence YEMWHNYPFLLGVGGCYFRT. Cysteine 134 and cysteine 219 are joined by a disulfide. The chain crosses the membrane as a helical span at residues 139–161; it reads LLFEMVCLASVLNVTALSVERYV. The Cytoplasmic portion of the chain corresponds to 162 to 181; that stretch reads AVVHPLQARSMVTRAHVRRV. The helical transmembrane segment at 182–202 threads the bilayer; it reads LGAVWGLAMLCSLPNTSLHGI. Residues 203 to 235 are Extracellular-facing; sequence RQLHVPCRGPVPDSAVCMLVRPRALYNMVVQTT. A helical membrane pass occupies residues 236 to 256; the sequence is ALLFFCLPMAIMSVLYLLIGL. At 257 to 294 the chain is on the cytoplasmic side; it reads RLRRERLLLMQEAKGRGSAAARSRYTCRLQQHDRGRRQ. A helical membrane pass occupies residues 295–315; that stretch reads VTKMLFVLVVVFGICWAPFHA. Over 316–338 the chain is Extracellular; that stretch reads DRVMWSVVSQWTDGLHLAFQHVH. A helical membrane pass occupies residues 339–359; that stretch reads VISGIFFYLGSAANPVLYSLM. Residues 360–426 lie on the Cytoplasmic side of the membrane; it reads SSRFRETFQE…PEAQQETDPS (67 aa).

The protein belongs to the G-protein coupled receptor 1 family. Expressed in greatest abundance in peripheral organs, particularly in elements of the gastrointestinal and urogenital systems with highest levels in testes. In central nervous system structures express levels are much lower than those seen in peripheral organs. Within the CNS, has been detected in highest abundance in the cerebellum, dorsal root ganglia, hippocampus, and spinal cord.

Its subcellular location is the cell membrane. In terms of biological role, receptor for the neuromedin-U and neuromedin-S neuropeptides. This chain is Neuromedin-U receptor 1 (NMUR1), found in Homo sapiens (Human).